Consider the following 152-residue polypeptide: Ninjurin-1 (152 aa).

Residue methionine 1 is modified to N-acetylmethionine. Acidic residues predominate over residues 1–10; that stretch reads MESGTEEYEL. Positions 1–29 are disordered; the sequence is MESGTEEYELNGDLRPGSPGSPDALPPRW. The Extracellular segment spans residues 1–78; it reads MESGTEEYEL…EQGNDFAFFV (78 aa). Residues serine 18 and serine 21 each carry the phosphoserine modification. The tract at residues 26–37 is N-terminal adhesion motif; sequence PPRWGLRNRPIN. A required to induce plasma membrane rupture region spans residues 40-69; it reads HYANKKSAAESMLDIALLMANASQLKAVVE. Residues 44-55 form a helix alpha1 region; the sequence is KKSAAESMLDIA. Residues 58–74 form a helix alpha2 region; sequence MANASQLKAVVEQGNDF. The N-linked (GlcNAc...) asparagine glycan is linked to asparagine 60. A helical membrane pass occupies residues 79-103; that stretch reads PLVVLISISLVLQIGVGVLLIFLVK. The Cytoplasmic portion of the chain corresponds to 104–113; it reads YDLNNPAKHA. The helical transmembrane segment at 114–138 threads the bilayer; the sequence is KLDFLNNLATGLVFIIVVVNIFITA. Over 139-152 the chain is Extracellular; the sequence is FGVQKPVMDVAPRQ.

The protein belongs to the ninjurin family. In terms of assembly, homodimer; in absence of death stimuli, forms an inactive homodimer. Homooligomer; in response to death stimuli, homooligomerizes into long, highly branched filaments and large, ring-shaped structures in the membrane. In terms of processing, cleaved by MMP9 protease to generate the Secreted ninjurin-1 form. Post-translationally, N-linked glycosylation is required for homooligomerization.

The protein localises to the cell membrane. The protein resides in the synaptic cell membrane. It is found in the secreted. In response to death stimuli, homooligomerizes and disrupts membrane integrity by introducing the hydrophilic faces of alpha1 and alpha2 helices into the hydrophobic membrane. Homooligomerization and ability to mediate plasma membrane rupture is inhibited by glycine; it is unclear whether glycine directly or indirectly inhibits homooligomerization. In normal conditions, NINJ1 is autoinhibited via formation of a homodimer: in the inactive homodimer, the alpha1 and alpha2 helices (residues 44-74) form a single transmembrane region without a kink, in which hydrophilic faces of alpha1 and alpha2 helices are sequestered. Effector of various programmed cell death, such as pyroptosis and necroptosis, which mediates plasma membrane rupture (cytolysis). Oligomerizes in response to death stimuli and forms ring-like structures on the plasma membrane: acts by cutting and shedding membrane disks, like a cookie cutter, leading to membrane damage and loss that cannot be repaired by the cell. Plasma membrane rupture leads to release intracellular molecules named damage-associated molecular patterns (DAMPs) that propagate the inflammatory response. Mechanistically, mediates plasma membrane rupture by introducing hydrophilic faces of 2 alpha helices into the hydrophobic membrane. Induces plasma membrane rupture downstream of Gasdermin (GSDMA, GSDMB, GSDMC, GSDMD, or GSDME) or MLKL during pyroptosis or necroptosis, respectively. Acts as an effector of PANoptosis downstream of CASP1, CASP4, CASP8 and RIPK3. Also induces plasma membrane rupture in response to cell swelling caused by osmotic stress and ferroptosis downstream of lipid peroxidation. Acts as a regulator of Toll-like receptor 4 (TLR4) signaling triggered by lipopolysaccharide (LPS) during systemic inflammation; directly binds LPS. Involved in leukocyte migration during inflammation by promoting transendothelial migration of macrophages via homotypic binding. Promotes the migration of monocytes across the brain endothelium to central nervous system inflammatory lesions. Also acts as a homophilic transmembrane adhesion molecule involved in various processes such as axonal growth, cell chemotaxis and angiogenesis. Promotes cell adhesion by mediating homophilic interactions via its extracellular N-terminal adhesion motif (N-NAM). Involved in the progression of the inflammatory stress by promoting cell-to-cell interactions between immune cells and endothelial cells. Plays a role in nerve regeneration by promoting maturation of Schwann cells. Acts as a regulator of angiogenesis. Promotes the formation of new vessels by mediating the interaction between capillary pericyte cells and endothelial cells. Also mediates vascular functions in penile tissue as well as vascular formation. Promotes osteoclasts development by enhancing the survival of prefusion osteoclasts. Also involved in striated muscle growth and differentiation. Also involved in cell senescence in a p53/TP53 manner, possibly by acting as an indirect regulator of p53/TP53 mRNA translation. In terms of biological role, secreted form generated by cleavage, which has chemotactic activity. Acts as an anti-inflammatory mediator by promoting monocyte recruitment, thereby ameliorating atherosclerosis. This chain is Ninjurin-1, found in Mus musculus (Mouse).